A 400-amino-acid chain; its full sequence is CCA-adding enzyme (400 aa).

The ATP site is built by Gly28 and Arg31. Residues Gly28 and Arg31 each contribute to the CTP site. Residues Asp41 and Asp43 each contribute to the Mg(2+) site. ATP is bound by residues Arg112, Asp155, Arg158, Arg161, and Arg164. 5 residues coordinate CTP: Arg112, Asp155, Arg158, Arg161, and Arg164.

Belongs to the tRNA nucleotidyltransferase/poly(A) polymerase family. Bacterial CCA-adding enzyme type 3 subfamily. In terms of assembly, homodimer. It depends on Mg(2+) as a cofactor.

It carries out the reaction a tRNA precursor + 2 CTP + ATP = a tRNA with a 3' CCA end + 3 diphosphate. The enzyme catalyses a tRNA with a 3' CCA end + 2 CTP + ATP = a tRNA with a 3' CCACCA end + 3 diphosphate. Functionally, catalyzes the addition and repair of the essential 3'-terminal CCA sequence in tRNAs without using a nucleic acid template. Adds these three nucleotides in the order of C, C, and A to the tRNA nucleotide-73, using CTP and ATP as substrates and producing inorganic pyrophosphate. tRNA 3'-terminal CCA addition is required both for tRNA processing and repair. Also involved in tRNA surveillance by mediating tandem CCA addition to generate a CCACCA at the 3' terminus of unstable tRNAs. While stable tRNAs receive only 3'-terminal CCA, unstable tRNAs are marked with CCACCA and rapidly degraded. This chain is CCA-adding enzyme, found in Staphylococcus aureus (strain MSSA476).